The sequence spans 223 residues: Alpha-S2-casein (223 aa).

Positions 1 to 15 (MKLFIFTCLLAVALA) are cleaved as a signal peptide. Ser23, Ser24, Ser25, Ser28, Ser46, Ser71, Ser72, and Ser73 each carry phosphoserine. Repeats lie at residues 76 to 128 (FADI…TLGK) and 129 to 223 (EQIS…ERQA). Residues Ser132, Ser147, and Ser155 each carry the phosphoserine modification.

It belongs to the alpha-casein family. As to expression, mammary gland specific. Secreted in milk.

Its subcellular location is the secreted. In terms of biological role, important role in the capacity of milk to transport calcium phosphate. In Cavia porcellus (Guinea pig), this protein is Alpha-S2-casein (CSN1S2).